Consider the following 216-residue polypeptide: Ribonuclease HII (216 aa).

Positions tryptophan 33 to valine 216 constitute an RNase H type-2 domain. A divalent metal cation contacts are provided by aspartate 39, glutamate 40, and aspartate 130.

It belongs to the RNase HII family. Mn(2+) serves as cofactor. Mg(2+) is required as a cofactor.

It localises to the cytoplasm. It carries out the reaction Endonucleolytic cleavage to 5'-phosphomonoester.. Functionally, endonuclease that specifically degrades the RNA of RNA-DNA hybrids. The protein is Ribonuclease HII of Rhizobium meliloti (strain 1021) (Ensifer meliloti).